A 174-amino-acid chain; its full sequence is Transgelin (174 aa).

The Calponin-homology (CH) domain maps to 3-109 (SQLEKEAREW…SIHSFSRYAA (107 aa)).

Binds to actin.

The protein resides in the cytoplasm. Functionally, has actin-binding and actin-bundling activity and is a component of the actin patch. Stabilizes actin filaments against disassembly. Cross-links F-actin and is required for the formation of the contractile F-actin ring. This is Transgelin (stg1) from Schizosaccharomyces pombe (strain 972 / ATCC 24843) (Fission yeast).